The sequence spans 617 residues: DNA double-strand break repair protein Mre11 (617 aa).

Mn(2+) contacts are provided by Asp-12, His-14, Asp-53, and Asn-88. Catalysis depends on His-89, which acts as the Proton donor. Positions 158, 189, and 191 each coordinate Mn(2+). Low complexity predominate over residues Ser-395 to Ile-432. Disordered stretches follow at residues Ser-395–Glu-437 and Val-513–Leu-617. The segment covering Ala-529–Ser-547 has biased composition (polar residues). Residues Ile-549–Glu-559 are compositionally biased toward low complexity. Residues Ile-560–Pro-583 are compositionally biased toward basic and acidic residues.

The protein belongs to the MRE11/RAD32 family. Homodimer. Forms a heterotetramer composed of two Mre11 subunits and two Rad50 subunits. Mn(2+) serves as cofactor.

With respect to regulation, nuclease activity is regulated by Rad50. In terms of biological role, part of the Rad50/Mre11 complex, which is involved in the early steps of DNA double-strand break (DSB) repair. The complex may facilitate opening of the processed DNA ends to aid in the recruitment of HerA and NurA. Mre11 binds to DSB ends and has both double-stranded 3'-5' exonuclease activity and single-stranded endonuclease activity. The sequence is that of DNA double-strand break repair protein Mre11 from Methanosarcina mazei (strain ATCC BAA-159 / DSM 3647 / Goe1 / Go1 / JCM 11833 / OCM 88) (Methanosarcina frisia).